The primary structure comprises 140 residues: MTIQYTFSMIKPDAIKRNKIGQVNTYLENAGLKIVAQKMKFLTKYEAACFYDEHRARPFFNSLVEYITSGAVVLQVLKGEDAITLNRTVMGATNPAEAEAGTIRKDLGESIEANSIHGSDSENSAKREIAFFFNKSEIIE.

6 residues coordinate ATP: K11, F59, R87, T93, R104, and N114. Catalysis depends on H117, which acts as the Pros-phosphohistidine intermediate.

This sequence belongs to the NDK family. Homotetramer. It depends on Mg(2+) as a cofactor.

It is found in the cytoplasm. The enzyme catalyses a 2'-deoxyribonucleoside 5'-diphosphate + ATP = a 2'-deoxyribonucleoside 5'-triphosphate + ADP. It catalyses the reaction a ribonucleoside 5'-diphosphate + ATP = a ribonucleoside 5'-triphosphate + ADP. Functionally, major role in the synthesis of nucleoside triphosphates other than ATP. The ATP gamma phosphate is transferred to the NDP beta phosphate via a ping-pong mechanism, using a phosphorylated active-site intermediate. This Rickettsia peacockii (strain Rustic) protein is Nucleoside diphosphate kinase.